A 1056-amino-acid polypeptide reads, in one-letter code: Kinesin-like protein KIN-5A (1056 aa).

The interval 1-44 is disordered; the sequence is MDRRIGLTSPSPKSTEKSGRDLRSGGDANGGANTNSNSIPRGDK. Basic and acidic residues predominate over residues 14 to 24; sequence STEKSGRDLRS. The region spanning 49 to 395 is the Kinesin motor domain; sequence NVQVILRCRP…LDYAHRAKNI (347 aa). 135 to 142 is an ATP binding site; sequence GQTGTGKT. Residues 443-525 are a coiled coil; it reads QEEAEKKAMT…STIKEKEYVI (83 aa).

Belongs to the TRAFAC class myosin-kinesin ATPase superfamily. Kinesin family. KIN-5/BimC subfamily.

It is found in the cytoplasm. Its subcellular location is the cytoskeleton. It localises to the spindle. Functionally, responsible for microtubule translocation. May be important for the organization of phragmoplast-specific arrays of microtubules. Plays an essential role in stabilizing the mitotic spindle. Required during mitotic cytokinesis. The sequence is that of Kinesin-like protein KIN-5A from Oryza sativa subsp. japonica (Rice).